We begin with the raw amino-acid sequence, 381 residues long: Mannitol-1-phosphate 5-dehydrogenase (381 aa).

3-14 is an NAD(+) binding site; that stretch reads AVHFGAGNIGRG.

This sequence belongs to the mannitol dehydrogenase family.

The catalysed reaction is D-mannitol 1-phosphate + NAD(+) = beta-D-fructose 6-phosphate + NADH + H(+). This Photobacterium profundum (strain SS9) protein is Mannitol-1-phosphate 5-dehydrogenase.